We begin with the raw amino-acid sequence, 448 residues long: Oxysterol-binding protein homolog 6 (448 aa).

A disordered region spans residues 1–42 (MGSKKLTVGSDSHRLSKSSFSSNKSSHSATKDQPIDTDDIDE). Ser16 is modified (phosphoserine). Residues 17–28 (KSSFSSNKSSHS) show a composition bias toward low complexity. The tract at residues 54–391 (IISQLRPGCD…PGEDLDYCIY (338 aa)) is OSBP-related domain (ORD). A 1,2-diacyl-sn-glycero-3-phospho-(1D-myo-inositol 4-phosphate)-binding positions include 64–69 (LTRITL), 126–129 (KPLN), and 157–158 (HH). Residues 64-69 (LTRITL) and Asn129 each bind a 1,2-diacyl-sn-glycero-3-phospho-L-serine. Position 183 (Ser183) interacts with a 1,2-diacyl-sn-glycero-3-phospho-L-serine. Positions 351, 355, and 359 each coordinate a 1,2-diacyl-sn-glycero-3-phospho-(1D-myo-inositol 4-phosphate).

This sequence belongs to the OSBP family. Interacts with the AAA ATPase VPS4; regulates OSH6 membrane association. VPS4 is required for membrane dissociation of OSH6.

It is found in the cytoplasm. The protein resides in the cell membrane. Its subcellular location is the endoplasmic reticulum membrane. The catalysed reaction is a 1,2-diacyl-sn-glycero-3-phospho-L-serine(in) = a 1,2-diacyl-sn-glycero-3-phospho-L-serine(out). Lipid transport protein (LTP) involved in non-vesicular transfer of lipids between membranes. Functions in phosphoinositide-coupled directional transport of various lipids by carrying the lipid molecule in a hydrophobic pocket and transferring it between membranes through the cytosol. Involved in maintenance of intracellular sterol distribution and homeostasis. Catalyzes the lipid countertransport between the endoplasmic reticulum (ER) and the plasma membrane (PM). Specifically exchanges phosphatidylserine (PS) with phosphatidylinositol 4-phosphate (PI4P), delivering phosphatidylserine to the PM in exchange for PI4P, which is delivered to the ER-localized PI4P phosphatase SAC1 for degradation. Thus, by maintaining a PI4P gradient at the ER/PM interface, SAC1 drives PS transport. Binds phosphatidylserine and PI4P in a mutually exclusive manner. Also binds phosphatidic acid (PA). The polypeptide is Oxysterol-binding protein homolog 6 (Saccharomyces cerevisiae (strain ATCC 204508 / S288c) (Baker's yeast)).